We begin with the raw amino-acid sequence, 364 residues long: tRNA 2-selenouridine synthase (364 aa).

Positions 14-137 (LLADTPLIDV…LRQTAIQATW (124 aa)) constitute a Rhodanese domain. The active-site S-selanylcysteine intermediate is Cys-97.

This sequence belongs to the SelU family. In terms of assembly, monomer.

It carries out the reaction 5-methylaminomethyl-2-thiouridine(34) in tRNA + selenophosphate + (2E)-geranyl diphosphate + H2O + H(+) = 5-methylaminomethyl-2-selenouridine(34) in tRNA + (2E)-thiogeraniol + phosphate + diphosphate. The catalysed reaction is 5-methylaminomethyl-2-thiouridine(34) in tRNA + (2E)-geranyl diphosphate = 5-methylaminomethyl-S-(2E)-geranyl-thiouridine(34) in tRNA + diphosphate. It catalyses the reaction 5-methylaminomethyl-S-(2E)-geranyl-thiouridine(34) in tRNA + selenophosphate + H(+) = 5-methylaminomethyl-2-(Se-phospho)selenouridine(34) in tRNA + (2E)-thiogeraniol. The enzyme catalyses 5-methylaminomethyl-2-(Se-phospho)selenouridine(34) in tRNA + H2O = 5-methylaminomethyl-2-selenouridine(34) in tRNA + phosphate. Involved in the post-transcriptional modification of the uridine at the wobble position (U34) of tRNA(Lys), tRNA(Glu) and tRNA(Gln). Catalyzes the conversion of 2-thiouridine (S2U-RNA) to 2-selenouridine (Se2U-RNA). Acts in a two-step process involving geranylation of 2-thiouridine (S2U) to S-geranyl-2-thiouridine (geS2U) and subsequent selenation of the latter derivative to 2-selenouridine (Se2U) in the tRNA chain. The sequence is that of tRNA 2-selenouridine synthase from Salmonella paratyphi B (strain ATCC BAA-1250 / SPB7).